The chain runs to 262 residues: Small ribosomal subunit protein eS4C (262 aa).

The region spanning 42-105 is the S4 RNA-binding domain; sequence LPLIVFLRNR…GEHFRLVYDI (64 aa). Thr194 carries the post-translational modification Phosphothreonine.

It belongs to the eukaryotic ribosomal protein eS4 family. Component of the small ribosomal subunit (SSU). Mature yeast ribosomes consist of a small (40S) and a large (60S) subunit. The 40S small subunit contains 1 molecule of ribosomal RNA (18S rRNA) and at least 33 different proteins. The large 60S subunit contains 3 rRNA molecules (25S, 5.8S and 5S rRNA) and at least 46 different proteins.

It localises to the cytoplasm. Its function is as follows. Component of the ribosome, a large ribonucleoprotein complex responsible for the synthesis of proteins in the cell. The small ribosomal subunit (SSU) binds messenger RNAs (mRNAs) and translates the encoded message by selecting cognate aminoacyl-transfer RNA (tRNA) molecules. The large subunit (LSU) contains the ribosomal catalytic site termed the peptidyl transferase center (PTC), which catalyzes the formation of peptide bonds, thereby polymerizing the amino acids delivered by tRNAs into a polypeptide chain. The nascent polypeptides leave the ribosome through a tunnel in the LSU and interact with protein factors that function in enzymatic processing, targeting, and the membrane insertion of nascent chains at the exit of the ribosomal tunnel. This is Small ribosomal subunit protein eS4C (rps403) from Schizosaccharomyces pombe (strain 972 / ATCC 24843) (Fission yeast).